A 493-amino-acid chain; its full sequence is MVPVIALVGRPNVGKSTLFNRLTKSRDAIVAEYAGLTRDRQYGEARWQGRTYIVIDTGGISGDEEGIDAKMAEQSLQAIEEADAVLFLVDSRAGMTAADQMIAEHLRKRNKRSFLIANKVDTIDPDLARAEFSPLGLGDALPIAAAHGRGINHMLQEALGIFPKDNAEEEGEGEPASEEVAEGEEPTRIPGPSEKDGIKIAIIGRPNVGKSTLVNRMLGEERVIVYDQAGTTRDSIYIPFERNEEMYTLIDTAGVRRRGKIFEAVEKFSVVKTLQAIQDANVVIFVMDAREGVVEHDLNLLGFVLETGRALVIALNKWDGMEAAERDYVKTELERRLLFVDFADIHFISALHGTGVGHLYKSVQESFRSAVTRWPTSRLTSILEDAVQVHQPPMVNGRRIKLRYAHLGGANPPLIVIHGNQVDAVPKAYTRYLEKTYRRVLKLVGTPIRIEYKGGENPYEGKKNSLTARQVNKKRRLMSHHKKAEKKKKDKRR.

Positions 3–166 constitute an EngA-type G 1 domain; that stretch reads PVIALVGRPN…EALGIFPKDN (164 aa). GTP is bound by residues 9–16, 56–60, and 118–121; these read GRPNVGKS, DTGGI, and NKVD. Residues 166 to 195 are disordered; sequence NAEEEGEGEPASEEVAEGEEPTRIPGPSEK. Residues 167–184 show a composition bias toward acidic residues; it reads AEEEGEGEPASEEVAEGE. Residues 198–371 form the EngA-type G 2 domain; that stretch reads IKIAIIGRPN…SVQESFRSAV (174 aa). Residues 204–211, 251–255, and 316–319 each bind GTP; these read GRPNVGKS, DTAGV, and NKWD. Residues 372-456 form the KH-like domain; the sequence is TRWPTSRLTS…PIRIEYKGGE (85 aa). Basic and acidic residues predominate over residues 454–463; that stretch reads GGENPYEGKK. The tract at residues 454–493 is disordered; sequence GGENPYEGKKNSLTARQVNKKRRLMSHHKKAEKKKKDKRR. The span at 471-493 shows a compositional bias: basic residues; that stretch reads VNKKRRLMSHHKKAEKKKKDKRR.

Belongs to the TRAFAC class TrmE-Era-EngA-EngB-Septin-like GTPase superfamily. EngA (Der) GTPase family. Associates with the 50S ribosomal subunit.

In terms of biological role, GTPase that plays an essential role in the late steps of ribosome biogenesis. The sequence is that of GTPase Der from Pseudomonas aeruginosa (strain UCBPP-PA14).